A 160-amino-acid polypeptide reads, in one-letter code: Putative pre-16S rRNA nuclease (160 aa).

It belongs to the YqgF nuclease family.

It is found in the cytoplasm. In terms of biological role, could be a nuclease involved in processing of the 5'-end of pre-16S rRNA. This chain is Putative pre-16S rRNA nuclease, found in Cutibacterium acnes (strain DSM 16379 / KPA171202) (Propionibacterium acnes).